Consider the following 874-residue polypeptide: Coatomer subunit gamma-1 (874 aa).

Residues 1–11 are compositionally biased toward basic and acidic residues; sequence MLKKFDKKDEE. Positions 1-21 are disordered; it reads MLKKFDKKDEESGGGSNPLQH. HEAT repeat units follow at residues 64-101, 283-320, 322-355, and 356-392; these read TEATEAFFAMTKLFQSNDPTLRRMCYLTIKEMSCIAED, KELAPAVSVLQLFCSSPKAALRYAAVRTLNKVAMKHPS, VTACNLDLENLVTDSNRSIATLAITTLLKTGSES, and SIDRLMKQISSFMSEISDEFKVVVVQAISALCQKYPR. Residue Thr594 is modified to Phosphothreonine. An interaction with ZNF289/ARFGAP2 region spans residues 609-874; it reads RQEIFQEQLA…PVDIILASVG (266 aa).

It belongs to the COPG family. In terms of assembly, oligomeric complex that consists of at least the alpha, beta, beta', gamma, delta, epsilon and zeta subunits. Interacts with ZNF289/ARFGAP2 through its C-terminal appendage domain. Interacts with EGFR upon EGF treatment; interaction is essential for regulation of EGF-dependent nuclear transport of EGFR by retrograde trafficking from the Golgi to the ER. The coatomer interacts with KDEL receptors; the interaction is important for retrograde trafficking of KDEL-bearing proteins from the Golgi to the endoplasmic reticulum. Interacts with COPB1. Interacts with TMED10 (via C-terminus). Interacts with TMED2, TMED3, TMED7 and TMED9.

Its subcellular location is the cytoplasm. It is found in the cytosol. The protein localises to the golgi apparatus membrane. The protein resides in the cytoplasmic vesicle. It localises to the COPI-coated vesicle membrane. In terms of biological role, the coatomer is a cytosolic protein complex that binds to dilysine motifs and reversibly associates with Golgi non-clathrin-coated vesicles, which further mediate biosynthetic protein transport from the ER, via the Golgi up to the trans Golgi network. Coatomer complex is required for budding from Golgi membranes, and is essential for the retrograde Golgi-to-ER transport of dilysine-tagged proteins. In mammals, the coatomer can only be recruited by membranes associated to ADP-ribosylation factors (ARFs), which are small GTP-binding proteins; the complex also influences the Golgi structural integrity, as well as the processing, activity, and endocytic recycling of LDL receptors. Required for limiting lipid storage in lipid droplets. Involved in lipid homeostasis by regulating the presence of perilipin family members PLIN2 and PLIN3 at the lipid droplet surface and promoting the association of adipocyte triglyceride lipase (PNPLA2) with the lipid droplet surface to mediate lipolysis. This chain is Coatomer subunit gamma-1 (Copg1), found in Mus musculus (Mouse).